The chain runs to 136 residues: Large ribosomal subunit protein uL16 (136 aa).

This sequence belongs to the universal ribosomal protein uL16 family. In terms of assembly, part of the 50S ribosomal subunit.

Functionally, binds 23S rRNA and is also seen to make contacts with the A and possibly P site tRNAs. The chain is Large ribosomal subunit protein uL16 from Pectobacterium atrosepticum (strain SCRI 1043 / ATCC BAA-672) (Erwinia carotovora subsp. atroseptica).